Here is a 178-residue protein sequence, read N- to C-terminus: Fimbrial adapter PapK (178 aa).

An N-terminal signal peptide occupies residues 1 to 21 (MIKSTGALLLFAALSAGQAIA).

The protein localises to the secreted. The protein resides in the fimbrium. Adapter that links the pilus rod to the base of the tip fibrillum. Regulates the length of the tip fibrillum and joins it to the pilus rod. Pili are polar filaments radiating from the surface of the bacterium to a length of 0.5-1.5 micrometers and numbering 100-300 per cell, and enable bacteria to colonize the epithelium of specific host organs. The protein is Fimbrial adapter PapK (papK) of Escherichia coli O6:H1 (strain CFT073 / ATCC 700928 / UPEC).